The sequence spans 233 residues: 2-C-methyl-D-erythritol 4-phosphate cytidylyltransferase (233 aa).

The protein belongs to the IspD/TarI cytidylyltransferase family. IspD subfamily.

The enzyme catalyses 2-C-methyl-D-erythritol 4-phosphate + CTP + H(+) = 4-CDP-2-C-methyl-D-erythritol + diphosphate. Its pathway is isoprenoid biosynthesis; isopentenyl diphosphate biosynthesis via DXP pathway; isopentenyl diphosphate from 1-deoxy-D-xylulose 5-phosphate: step 2/6. Functionally, catalyzes the formation of 4-diphosphocytidyl-2-C-methyl-D-erythritol from CTP and 2-C-methyl-D-erythritol 4-phosphate (MEP). In Geotalea uraniireducens (strain Rf4) (Geobacter uraniireducens), this protein is 2-C-methyl-D-erythritol 4-phosphate cytidylyltransferase.